Reading from the N-terminus, the 86-residue chain is MSENNTSRKTRTGSVVSDRMEKSVVVRVERKVRHKLYGKFMKTSVKYLADDPENQCNIGDVVLIEECRPLSKRKRWRVKTILEQAV.

The protein belongs to the universal ribosomal protein uS17 family. In terms of assembly, part of the 30S ribosomal subunit.

One of the primary rRNA binding proteins, it binds specifically to the 5'-end of 16S ribosomal RNA. The polypeptide is Small ribosomal subunit protein uS17 (Desulfotalea psychrophila (strain LSv54 / DSM 12343)).